A 557-amino-acid polypeptide reads, in one-letter code: Dihydroxy-acid dehydratase (557 aa).

Cysteine 47 is a binding site for [2Fe-2S] cluster. A Mg(2+)-binding site is contributed by aspartate 79. Cysteine 120 serves as a coordination point for [2Fe-2S] cluster. 2 residues coordinate Mg(2+): aspartate 121 and lysine 122. At lysine 122 the chain carries N6-carboxylysine. Cysteine 192 is a binding site for [2Fe-2S] cluster. Glutamate 444 serves as a coordination point for Mg(2+). Serine 470 serves as the catalytic Proton acceptor.

The protein belongs to the IlvD/Edd family. Homodimer. It depends on [2Fe-2S] cluster as a cofactor. The cofactor is Mg(2+).

It carries out the reaction (2R)-2,3-dihydroxy-3-methylbutanoate = 3-methyl-2-oxobutanoate + H2O. It catalyses the reaction (2R,3R)-2,3-dihydroxy-3-methylpentanoate = (S)-3-methyl-2-oxopentanoate + H2O. It functions in the pathway amino-acid biosynthesis; L-isoleucine biosynthesis; L-isoleucine from 2-oxobutanoate: step 3/4. Its pathway is amino-acid biosynthesis; L-valine biosynthesis; L-valine from pyruvate: step 3/4. Functionally, functions in the biosynthesis of branched-chain amino acids. Catalyzes the dehydration of (2R,3R)-2,3-dihydroxy-3-methylpentanoate (2,3-dihydroxy-3-methylvalerate) into 2-oxo-3-methylpentanoate (2-oxo-3-methylvalerate) and of (2R)-2,3-dihydroxy-3-methylbutanoate (2,3-dihydroxyisovalerate) into 2-oxo-3-methylbutanoate (2-oxoisovalerate), the penultimate precursor to L-isoleucine and L-valine, respectively. In Parasynechococcus marenigrum (strain WH8102), this protein is Dihydroxy-acid dehydratase.